Reading from the N-terminus, the 348-residue chain is uncharacterized protein (348 aa).

WD repeat units lie at residues 59–98 (GFQG…VVYS), 142–182 (GHTD…LIQT), 185–226 (DNLG…LLGT), 229–267 (QQPG…ELFS), 270–309 (GPSL…QVTT), and 312–347 (GHQG…SALA).

This is an uncharacterized protein from Synechocystis sp. (strain ATCC 27184 / PCC 6803 / Kazusa).